Consider the following 139-residue polypeptide: uncharacterized protein (139 aa).

Residues 1–116 (MYNPWQVGAS…TRPRVVARGK (116 aa)) are disordered. Low complexity-rich tracts occupy residues 50–70 (RPRP…GPRP) and 84–110 (LPAY…TRPR).

This is an uncharacterized protein from Homo sapiens (Human).